Here is a 477-residue protein sequence, read N- to C-terminus: Tripartite motif-containing protein 72 (477 aa).

Zn(2+) is bound by residues Cys-14, Cys-17, Cys-29, His-31, Cys-34, Cys-37, Cys-53, Cys-56, Cys-86, His-89, Cys-97, Asp-100, Cys-105, Cys-108, His-114, and His-117. The RING-type zinc-finger motif lies at 14–57 (CPLCLQLFDAPVTAECGHSFCRACLIRVAGEPADDGTVACPCCQ). The B box-type zinc-finger motif lies at 81–122 (VPQGHCEEHLDPLSIYCEQDRTLVCGVCASLGSHRGHRLLPA). Residues 135–232 (QQKAQLQEAC…EKVLEEVADK (98 aa)) adopt a coiled-coil conformation. Cys-144 carries the S-nitrosocysteine modification. At Ser-255 the chain carries Phosphoserine. Residues 271–475 (DFKFQVWKKM…PLLLVGPDSE (205 aa)) form the B30.2/SPRY domain.

This sequence belongs to the TRIM/RBCC family. Homodimer. Homooligomer; disulfide-linked. Oligomerizes on the phospholipid membrane. Interacts with DYSF and CAV3. Post-translationally, disulfide bond formation at Cys-242 occurs in case of membrane damage that cause the entry of the oxidized milieu of the extracellular space, resulting in homooligomerization. In terms of processing, S-nitrosylation at Cys-144 stabilizes TRIM72 and protects against oxidation-induced protein degradation and cell death.

It localises to the cell membrane. It is found in the sarcolemma. The protein resides in the cytoplasmic vesicle membrane. It carries out the reaction S-ubiquitinyl-[E2 ubiquitin-conjugating enzyme]-L-cysteine + [acceptor protein]-L-lysine = [E2 ubiquitin-conjugating enzyme]-L-cysteine + N(6)-ubiquitinyl-[acceptor protein]-L-lysine.. It participates in protein modification; protein ubiquitination. Specifically binds phosphatidylserine. The binding to phospholipids enhances ubiquitination activity. Muscle-specific E3 ubiquitin-protein ligase that plays a central role in cell membrane repair by nucleating the assembly of the repair machinery at injury sites. Its ubiquitination activity is mediated by E2 ubiquitin-conjugating enzymes UBE2D1, UBE2D2 and UBE2D3. Acts as a sensor of oxidation: upon membrane damage, entry of extracellular oxidative environment results in disulfide bond formation and homooligomerization at the injury site. This oligomerization acts as a nucleation site for recruitment of TRIM72-containing vesicles to the injury site, leading to membrane patch formation. Probably acts upstream of the Ca(2+)-dependent membrane resealing process. Required for transport of DYSF to sites of cell injury during repair patch formation. Regulates membrane budding and exocytosis. May be involved in the regulation of the mobility of KCNB1-containing endocytic vesicles. This Rattus norvegicus (Rat) protein is Tripartite motif-containing protein 72.